The primary structure comprises 552 residues: Non-structural protein NS1 (552 aa).

This sequence belongs to the orbivirus non-structural protein NS1 family.

The chain is Non-structural protein NS1 (Segment-5) from Antilocapra americana (Pronghorn).